Here is a 415-residue protein sequence, read N- to C-terminus: ATP-dependent RNA helicase RhlB (415 aa).

Residues 9–37 (KKFSDFALYPPIVEVLDSKGFNNCTPIQA) carry the Q motif motif. One can recognise a Helicase ATP-binding domain in the interval 40 to 219 (LPTTLAGKDV…FEHMNNAEYV (180 aa)). 53–60 (AQTGTGKT) is a binding site for ATP. The DEAD box motif lies at 165–168 (DEAD). Residues 245–390 (RLLQTLIEEE…VSKYNSDALL (146 aa)) enclose the Helicase C-terminal domain. Positions 396-415 (PKRLTRRRSGAPRHNRKRPG) are disordered. A compositionally biased stretch (basic residues) spans 398-415 (RLTRRRSGAPRHNRKRPG).

The protein belongs to the DEAD box helicase family. RhlB subfamily. As to quaternary structure, component of the RNA degradosome, which is a multiprotein complex involved in RNA processing and mRNA degradation.

It is found in the cytoplasm. The enzyme catalyses ATP + H2O = ADP + phosphate + H(+). In terms of biological role, DEAD-box RNA helicase involved in RNA degradation. Has RNA-dependent ATPase activity and unwinds double-stranded RNA. This Sodalis glossinidius (strain morsitans) protein is ATP-dependent RNA helicase RhlB.